The sequence spans 478 residues: Zinc metalloproteinase/disintegrin ussurin (478 aa).

The signal sequence occupies residues 1 to 20 (MIQVLLVTICLAAFPYQGSS). A propeptide spanning residues 21 to 190 (IILESGNVND…KKASPLVVTT (170 aa)) is cleaved from the precursor. Residues 193–389 (RYVELVVVAD…RNPQCILNKP (197 aa)) form the Peptidase M12B domain. The Ca(2+) site is built by Glu196 and Asp280. 3 disulfide bridges follow: Cys304/Cys384, Cys344/Cys368, and Cys346/Cys351. His329 contacts Zn(2+). Glu330 is an active-site residue. Positions 333 and 339 each coordinate Zn(2+). Residues Cys384 and Asn387 each contribute to the Ca(2+) site. Residues 390–413 (LRTDIVSTPVSGNELLEAGEECDC) constitute a propeptide that is removed on maturation. The Disintegrin domain occupies 397–478 (TPVSGNELLE…AGCPRNPFHA (82 aa)). 6 cysteine pairs are disulfide-bonded: Cys411–Cys426, Cys413–Cys421, Cys420–Cys443, Cys434–Cys440, Cys439–Cys464, and Cys452–Cys471. Residues 456 to 458 (RGD) carry the Cell attachment site motif.

It belongs to the venom metalloproteinase (M12B) family. P-II subfamily. P-IIa sub-subfamily. Monomer. It depends on Zn(2+) as a cofactor. In terms of tissue distribution, expressed by the venom gland.

The protein localises to the secreted. Its function is as follows. Impairs hemostasis in the envenomed animal. Functionally, inhibits platelet aggregation induced by ADP, thrombin, platelet-activating factor and collagen. Acts by inhibiting fibrinogen interaction with platelet receptors GPIIb/GPIIIa (ITGA2B/ITGB3). The polypeptide is Zinc metalloproteinase/disintegrin ussurin (Gloydius ussuriensis (Ussuri mamushi)).